The chain runs to 112 residues: Protein FAM32A (112 aa).

The segment at 23–56 (TKRKKKKKDKDKAKMLEAMGTSKKNEEEKRRCLD) is disordered. The span at 45 to 56 (KKNEEEKRRCLD) shows a compositional bias: basic and acidic residues.

The protein belongs to the FAM32 family.

It localises to the nucleus. Its function is as follows. May induce G2 arrest and apoptosis. May also increase cell sensitivity to apoptotic stimuli. The protein is Protein FAM32A (Fam32a) of Rattus norvegicus (Rat).